The chain runs to 248 residues: Probable transcriptional regulatory protein BRADO1143 (248 aa).

The protein belongs to the TACO1 family.

The protein localises to the cytoplasm. The sequence is that of Probable transcriptional regulatory protein BRADO1143 from Bradyrhizobium sp. (strain ORS 278).